Consider the following 132-residue polypeptide: Secreted RxLR effector protein BLR08 (132 aa).

A signal peptide spans 1 to 22 (MRHKCLLAMAVVASMAFYSVIS). A glycan (N-linked (GlcNAc...) asparagine) is linked at Asn25. A disordered region spans residues 36-57 (NRRLRPRVEPTANELDKQSDVD). Residues 37–83 (RRLRPRVEPTANELDKQSDVDTKLEADRRLGYPGESGFMLEGELEER) carry the RxLR-dEER motif. A helical transmembrane segment spans residues 111-131 (FFLGLFASVIGVSIISACYGI).

It belongs to the RxLR effector family. Interacts with host transcription factor NAC069.

Its subcellular location is the secreted. The protein resides in the host endoplasmic reticulum membrane. Functionally, secreted effector that inhibits stress-induced relocalization of the transcription factor NAC069 to the nucleus, thus affecting its broad role in abiotic and biotic stress responses. The polypeptide is Secreted RxLR effector protein BLR08 (Bremia lactucae (Lettuce downy mildew)).